Reading from the N-terminus, the 559-residue chain is Glucose-6-phosphate isomerase (559 aa).

Glutamate 363 (proton donor) is an active-site residue. Residues histidine 394 and lysine 523 contribute to the active site.

Belongs to the GPI family.

The protein resides in the cytoplasm. It catalyses the reaction alpha-D-glucose 6-phosphate = beta-D-fructose 6-phosphate. It functions in the pathway carbohydrate biosynthesis; gluconeogenesis. It participates in carbohydrate degradation; glycolysis; D-glyceraldehyde 3-phosphate and glycerone phosphate from D-glucose: step 2/4. Catalyzes the reversible isomerization of glucose-6-phosphate to fructose-6-phosphate. This is Glucose-6-phosphate isomerase from Bartonella quintana (strain Toulouse) (Rochalimaea quintana).